Reading from the N-terminus, the 45-residue chain is Ice-structuring protein SS-8 (45 aa).

A Blocked amino end (Met) modification is found at methionine 1. Repeats lie at residues 9–21, 22–33, and 34–45; these read KAAR…ALAA, KTAADAAAKAAA, and KAAAIAAAAASA.

It belongs to the type-I AFP family.

In terms of biological role, antifreeze proteins lower the blood freezing point. This is Ice-structuring protein SS-8 from Myoxocephalus scorpius (Shorthorn sculpin).